Here is an 87-residue protein sequence, read N- to C-terminus: Elongation factor Ts, chloroplastic (87 aa).

This sequence belongs to the EF-Ts family.

The protein resides in the plastid. The protein localises to the chloroplast. In terms of biological role, associates with the EF-Tu.GDP complex and induces the exchange of GDP to GTP. It remains bound to the aminoacyl-tRNA.EF-Tu.GTP complex up to the GTP hydrolysis stage on the ribosome. The polypeptide is Elongation factor Ts, chloroplastic (tsf) (Antithamnion sp. (Red alga)).